A 150-amino-acid polypeptide reads, in one-letter code: Protein SprT-like (150 aa).

The 142-residue stretch at Leu6–Arg147 folds into the SprT-like domain. Residue His67 coordinates Zn(2+). Glu68 is an active-site residue. His71 provides a ligand contact to Zn(2+).

It belongs to the SprT family. It depends on Zn(2+) as a cofactor.

It localises to the cytoplasm. This chain is Protein SprT-like (ydcK), found in Bacillus subtilis (strain 168).